The primary structure comprises 163 residues: Probable cobalt-precorrin-6B C(15)-methyltransferase (decarboxylating) (163 aa).

Residues Thr-6, 30-34 (GCGSG), Asp-51, and Gly-75 each bind S-adenosyl-L-methionine.

This sequence belongs to the methyltransferase superfamily. Archaeal-type CbiT family.

It carries out the reaction Co-precorrin-6B + S-adenosyl-L-methionine = Co-precorrin-7 + S-adenosyl-L-homocysteine + CO2. It functions in the pathway cofactor biosynthesis; adenosylcobalamin biosynthesis; cob(II)yrinate a,c-diamide from sirohydrochlorin (anaerobic route): step 8/10. Catalyzes the methylation of C-15 in cobalt-precorrin-6B followed by the decarboxylation of C-12 to form cobalt-precorrin-7. This chain is Probable cobalt-precorrin-6B C(15)-methyltransferase (decarboxylating), found in Archaeoglobus fulgidus (strain ATCC 49558 / DSM 4304 / JCM 9628 / NBRC 100126 / VC-16).